Here is a 298-residue protein sequence, read N- to C-terminus: ATP synthase gamma chain (298 aa).

It belongs to the ATPase gamma chain family. F-type ATPases have 2 components, CF(1) - the catalytic core - and CF(0) - the membrane proton channel. CF(1) has five subunits: alpha(3), beta(3), gamma(1), delta(1), epsilon(1). CF(0) has three main subunits: a, b and c.

It is found in the cell inner membrane. Produces ATP from ADP in the presence of a proton gradient across the membrane. The gamma chain is believed to be important in regulating ATPase activity and the flow of protons through the CF(0) complex. The chain is ATP synthase gamma chain from Francisella tularensis subsp. tularensis (strain FSC 198).